The following is a 308-amino-acid chain: Porphobilinogen deaminase (308 aa).

Cysteine 243 is subject to S-(dipyrrolylmethanemethyl)cysteine.

Belongs to the HMBS family. As to quaternary structure, monomer. Dipyrromethane serves as cofactor.

It carries out the reaction 4 porphobilinogen + H2O = hydroxymethylbilane + 4 NH4(+). It functions in the pathway porphyrin-containing compound metabolism; protoporphyrin-IX biosynthesis; coproporphyrinogen-III from 5-aminolevulinate: step 2/4. Tetrapolymerization of the monopyrrole PBG into the hydroxymethylbilane pre-uroporphyrinogen in several discrete steps. This Mesorhizobium japonicum (strain LMG 29417 / CECT 9101 / MAFF 303099) (Mesorhizobium loti (strain MAFF 303099)) protein is Porphobilinogen deaminase.